A 207-amino-acid chain; its full sequence is Small ribosomal subunit protein uS2 (207 aa).

The protein belongs to the universal ribosomal protein uS2 family.

The protein is Small ribosomal subunit protein uS2 of Nitrosopumilus maritimus (strain SCM1).